The primary structure comprises 382 residues: Putative glutamate--cysteine ligase 2-1 (382 aa).

It belongs to the glutamate--cysteine ligase type 2 family. YbdK subfamily.

It catalyses the reaction L-cysteine + L-glutamate + ATP = gamma-L-glutamyl-L-cysteine + ADP + phosphate + H(+). Functionally, ATP-dependent carboxylate-amine ligase which exhibits weak glutamate--cysteine ligase activity. The chain is Putative glutamate--cysteine ligase 2-1 from Frankia casuarinae (strain DSM 45818 / CECT 9043 / HFP020203 / CcI3).